Here is a 247-residue protein sequence, read N- to C-terminus: SPX domain-containing protein 5 (247 aa).

The SPX domain occupies 1–139; that stretch reads MKFGKRLKRQ…GGVLRLPVIA (139 aa). Positions 224 to 247 are disordered; sequence SDWLIQSVQPPPPPPPSSPLIIPT. The segment covering 232–241 has biased composition (pro residues); that stretch reads QPPPPPPPSS.

The chain is SPX domain-containing protein 5 (SPX5) from Oryza sativa subsp. indica (Rice).